The following is a 416-amino-acid chain: PTS system N-acetylglucosamine-specific EIIC component (416 aa).

In terms of domain architecture, PTS EIIC type-1 spans 16–406 (SGLFQGLQKV…FNLKTPGREP (391 aa)). Helical transmembrane passes span 68-88 (AGGALTGSLPILFCIGVAIGF), 96-116 (TALAAVVGFLVYSKVLEAFPV), 130-150 (TYNDPGVLGGIIMGLLAAVLW), 170-190 (LVPIIMAFVGIVVGVFFGLVW), 196-216 (GISNFGEWMTGLGSGGAALFG), 266-286 (IFQAGFFPIMMFGLPAAALAM), 298-318 (VLGMMISLAATSFVTGVTEPI), 323-343 (MFIAPVLYVLHAVLTAISMAI), 344-364 (TWGLGVHAGFNFSAGFIDYAL), and 375-395 (IIPIGLVFAAIYYVTFRFAIV).

Its subcellular location is the cell membrane. The phosphoenolpyruvate-dependent sugar phosphotransferase system (sugar PTS), a major carbohydrate active transport system, catalyzes the phosphorylation of incoming sugar substrates concomitantly with their translocation across the cell membrane. This system is involved in N-acetylglucosamine (GlcNAc) transport. High-affinity permease, which exhibits a narrow specificity for GlcNAc. Essential for C-signaling between vegetative growth and development. The protein is PTS system N-acetylglucosamine-specific EIIC component of Streptomyces coelicolor (strain ATCC BAA-471 / A3(2) / M145).